The primary structure comprises 246 residues: uncharacterized protein (246 aa).

The signal sequence occupies residues M1–A24. A run of 2 helical transmembrane segments spans residues Y71 to V91 and F104 to A124.

The protein localises to the cell membrane. This is an uncharacterized protein from Mycobacterium tuberculosis (strain ATCC 25618 / H37Rv).